Reading from the N-terminus, the 735-residue chain is Post-transcriptional regulator MKT1 (735 aa).

The interval 475-722 is interaction with PBP1; that stretch reads QVIYNTMEET…ANERMKRAQK (248 aa).

It belongs to the XPG/RAD2 endonuclease family. As to quaternary structure, forms a complex composed of at least MKT1, PBP1, XAC1 and LSM12. Within the complex, interacts (via C-terminus) with PBP1; the interaction is direct. Interacts with RNA-binding protein ZC3H11 (via MKT1-binding motif); the interaction is direct. May interact with RNA-binding proteins CFB1 and CFB2. Interacts with the EIF4E6-EIF4G5 translation initiation complex via EIF4G5; the interaction with EIF4G5 is direct.

The protein resides in the cytoplasm. The protein localises to the cytosol. Its subcellular location is the stress granule. Its function is as follows. Involved in post-transcriptional regulation of gene expression. Promotes mRNA stabilization by recruiting a complex containing PBP1, LSM12 and XAC1 to mRNAs. Recruited to mRNAs by sequence-specific RNA binding proteins. May regulate translation through interactions with the EIF4E6-EIF4G5 translation initiation complex. The sequence is that of Post-transcriptional regulator MKT1 from Trypanosoma brucei brucei (strain 927/4 GUTat10.1).